The following is a 295-amino-acid chain: 4-hydroxy-tetrahydrodipicolinate synthase (295 aa).

Threonine 46 lines the pyruvate pocket. Tyrosine 134 acts as the Proton donor/acceptor in catalysis. The active-site Schiff-base intermediate with substrate is the lysine 162. Isoleucine 205 provides a ligand contact to pyruvate.

It belongs to the DapA family. Homotetramer; dimer of dimers.

It is found in the cytoplasm. It carries out the reaction L-aspartate 4-semialdehyde + pyruvate = (2S,4S)-4-hydroxy-2,3,4,5-tetrahydrodipicolinate + H2O + H(+). The protein operates within amino-acid biosynthesis; L-lysine biosynthesis via DAP pathway; (S)-tetrahydrodipicolinate from L-aspartate: step 3/4. Catalyzes the condensation of (S)-aspartate-beta-semialdehyde [(S)-ASA] and pyruvate to 4-hydroxy-tetrahydrodipicolinate (HTPA). This Anaeromyxobacter dehalogenans (strain 2CP-C) protein is 4-hydroxy-tetrahydrodipicolinate synthase.